The following is a 638-amino-acid chain: MGKIIGIDLGTTNSCVAVLDGDKPRVIENAEGERTTASVVAYTDGETLVGQPAKRQAVTNPTNTLFAIKRLIGRRFEDEEVQRDIEIMPYKIVKADNGDAWVEAQGQKMAAPQVSAEILKKMKKTAEDFLGEEVTGAVITVPAYFNDAQRQATKDAGRIAGLEVKRIINEPTAAALAYGLDKSGGDRTIAVYDLGGGTFDISIIEIDEVEGEKTFEVLATNGDTHLGGEDFDTRLINYLVDEFNKEQGINLKNDPLAMQRVKEAAEKAKIELSSTSQTDVNLPYVTADATGPKHMNVKVTRAKLESLVEDLVQRSLEPLKVALADADLSVNDITDVILVGGQTRMPMVQAKVAEFFGKEARRDVNPDEAVAMGAAVQGGVLAGDVKDVLLLDVTPLSLGIETMGGVMTKLVEKNTTIPTKANQVFSTAEDNQSAVTIHVLQGERKQASFNKSLGQFNLEGIQAAPRGMPQIEVTFDLDADGILHVSAKDKQTGKEQKITIQASGGLSDEDIEKMVQEAEANKEADKKFEELAAARNQADQMIHGTRKQVEEAGEALPAEEKEKIEAAISELETARKGDDKEAIDAKVQALMTAAQKLMEIAQQQAQAQQAQGADADAQQSKEDDVVDAEFEEVKDDKK.

Position 198 is a phosphothreonine; by autocatalysis (threonine 198). A compositionally biased stretch (low complexity) spans 603–618 (QQAQAQQAQGADADAQ). Residues 603–638 (QQAQAQQAQGADADAQQSKEDDVVDAEFEEVKDDKK) form a disordered region. Positions 624–638 (DVVDAEFEEVKDDKK) are enriched in acidic residues.

The protein belongs to the heat shock protein 70 family.

Acts as a chaperone. The protein is Chaperone protein DnaK of Vibrio campbellii (strain ATCC BAA-1116).